The primary structure comprises 778 residues: Putative ATP-dependent RNA helicase MJ1505 (778 aa).

A Helicase ATP-binding domain is found at 22-186; that stretch reads IAANALKKKT…EICENLGIEH (165 aa). An ATP-binding site is contributed by 35 to 42; the sequence is LSTGLGKT. The short motif at 137 to 140 is the DEAH box element; the sequence is DEAH. A Helicase C-terminal domain is found at 338 to 516; sequence KVVDMVKNIL…EIKEETEEIK (179 aa).

This sequence belongs to the DEAD box helicase family. DEAH subfamily.

The catalysed reaction is ATP + H2O = ADP + phosphate + H(+). In Methanocaldococcus jannaschii (strain ATCC 43067 / DSM 2661 / JAL-1 / JCM 10045 / NBRC 100440) (Methanococcus jannaschii), this protein is Putative ATP-dependent RNA helicase MJ1505.